The sequence spans 228 residues: Triosephosphate isomerase (228 aa).

12–14 (NFK) contributes to the substrate binding site. His-96 functions as the Electrophile in the catalytic mechanism. Glu-144 functions as the Proton acceptor in the catalytic mechanism. Residues Ile-149, Gly-184, and 205-206 (AS) each bind substrate.

It belongs to the triosephosphate isomerase family. In terms of assembly, homotetramer; dimer of dimers.

It localises to the cytoplasm. It catalyses the reaction D-glyceraldehyde 3-phosphate = dihydroxyacetone phosphate. It participates in carbohydrate biosynthesis; gluconeogenesis. It functions in the pathway carbohydrate degradation; glycolysis; D-glyceraldehyde 3-phosphate from glycerone phosphate: step 1/1. Involved in the gluconeogenesis. Catalyzes stereospecifically the conversion of dihydroxyacetone phosphate (DHAP) to D-glyceraldehyde-3-phosphate (G3P). The polypeptide is Triosephosphate isomerase (Pyrococcus furiosus (strain ATCC 43587 / DSM 3638 / JCM 8422 / Vc1)).